Consider the following 200-residue polypeptide: Signal peptidase complex catalytic subunit SEC11 (200 aa).

Topologically, residues 1 to 14 (MFAELAPYLSNPRQ) are cytoplasmic. Residues 15–33 (TLAQILNFALVLSTAFMGW) form a helical; Signal-anchor for type II membrane protein membrane-spanning segment. The Lumenal portion of the chain corresponds to 34–200 (KALSVYTNSP…MGVMVMLQRE (167 aa)). Residues Ser-53 and His-92 each act as charge relay system in the active site. A disordered region spans residues 101–129 (GDGGNKSQRRLEREADKPSGPGLSSPLSH). Asn-105 carries N-linked (GlcNAc...) asparagine glycosylation. Residues 118-128 (PSGPGLSSPLS) show a composition bias toward low complexity. Residue Asp-142 is the Charge relay system of the active site. Residues 186 to 197 (VLLGIMGVMVML) form a C-terminal short (CTS) helix region.

Belongs to the peptidase S26B family. In terms of assembly, component of the signal peptidase complex (SPC) composed of a catalytic subunit SEC11 and three accessory subunits SPC1, SPC2 and SPC3. The complex induces a local thinning of the ER membrane which is used to measure the length of the signal peptide (SP) h-region of protein substrates. This ensures the selectivity of the complex towards h-regions shorter than 18-20 amino acids. SPC associates with the translocon complex.

It localises to the endoplasmic reticulum membrane. It carries out the reaction Cleavage of hydrophobic, N-terminal signal or leader sequences from secreted and periplasmic proteins.. In terms of biological role, catalytic component of the signal peptidase complex (SPC) which catalyzes the cleavage of N-terminal signal sequences from nascent proteins as they are translocated into the lumen of the endoplasmic reticulum. Specifically cleaves N-terminal signal peptides that contain a hydrophobic alpha-helix (h-region) shorter than 18-20 amino acids. The chain is Signal peptidase complex catalytic subunit SEC11 (SEC11) from Arthroderma otae (strain ATCC MYA-4605 / CBS 113480) (Microsporum canis).